We begin with the raw amino-acid sequence, 994 residues long: MPESLIAGIPVHFPFEPYPVQRAYMEKVIQCLKDGTNGVLESPTGTGKTLSLLCSSLAWIRTRQSEHQQQMIKLDKGADLLGGGAGGGPELSDLAKTMGKANNWGVPKVIYASRTHSQLTQAMRELKRTAYSNMRSVVLGSRDQLCIHPEVSREVGNSNKVNMCKLRVHSKTCTFQLRVESKKDHPDFRGPSIMDIEDLIKVGQKLKMCPYYASKELVPQADITFMPYNYLLDPKARKANKIELGNTIVILDEAHNIEKICEESASVQIKSSDVAIAIEDVTHIMKAFASDSPQDMAGDEPKDFTIDDLMLLKEMLLDLEKAIDAVAVDNPIDGATYPASMIYELLGKANFTYGNVATIVALLDKLVQYLMVASQQQMSLRKGGSFTLLSDLLTIVFANKESVMGKVHASFKVHVQVEESKQPQGKQAPAKQAGGWLSKASLTNGSTGKVAKIINFWCFNPGFGMEQLLNTQVRSVILTSGTLAPLKPLIAELAIPVAQHLENPHIVDQSQVYVKIIGTGPDRQPLISNYTNRDNPKYISSLGQTILNVSRLVPDGLLVFFPSYPMLNKCVDAWQASGLWADIASKKPIFLEPRGKDQFTSTMEEFYQAIRDSKGACFMAVCRGKVSEGLDFADRNGRAVIITGLPFPPLKDPKVILKRRYLESNRTRENQLLSGNEWYNLEATRAVNQAIGRVIRHRNDYGAILLCDSRFKDAAQVQQLSKWIRGHLGDRPQCSPFGPIVRELRQFFKNAETTMKQPDERESGAPLETVIKKEDEPLAPISQIKREPGSNATFKAANETAIKVEMANSIKSWSPDDYACAAGRKLGGSSAPNAMDFMSRLDSNVSSIDFNCMDSRNGSNSSGLVKIHKRERSSPPGSSQSSSQTAKKRYKLVENISTIKVEPPVEVKKEVPESRAAFLREIRSLVGQDQFRAFGQALLEYKDGSKDKFEALMKVVFEVLGGPRCRHLLVGMRKYIKADDKPEFDIRLAKLEKS.

Residues 7–316 form the Helicase ATP-binding domain; sequence AGIPVHFPFE…DDLMLLKEML (310 aa). Residue 42–49 participates in ATP binding; sequence SPTGTGKT. Positions 146, 164, 173, and 209 each coordinate [4Fe-4S] cluster. The short motif at 252–255 is the DEAH box element; that stretch reads DEAH. The segment at 861–887 is disordered; that stretch reads SSGLVKIHKRERSSPPGSSQSSSQTAK. The segment covering 874–884 has biased composition (low complexity); sequence SPPGSSQSSSQ.

The protein belongs to the helicase family. RAD3/XPD subfamily.

It is found in the nucleus. It carries out the reaction ATP + H2O = ADP + phosphate + H(+). A probable ATP-dependent DNA helicase implicated in DNA repair and the maintenance of genomic stability. Acts as an anti-recombinase to counteract toxic recombination and limit crossover during meiosis. Regulates meiotic recombination and crossover homeostasis by physically dissociating strand invasion events and thereby promotes noncrossover repair by meiotic synthesis dependent strand annealing (SDSA) as well as disassembly of D loop recombination intermediates. The chain is Regulator of telomere elongation helicase 1 homolog from Drosophila ananassae (Fruit fly).